The sequence spans 378 residues: Probable pectin lyase C (378 aa).

Positions 1-18 (MKVPFLQLLCLNAALASA) are cleaved as a signal peptide. 2 disulfide bridges follow: Cys-81–Cys-100 and Cys-90–Cys-220. Asn-123 carries N-linked (GlcNAc...) asparagine glycosylation. Residue Arg-250 is part of the active site. Cys-316 and Cys-324 are joined by a disulfide.

It belongs to the polysaccharide lyase 1 family.

The protein localises to the secreted. The catalysed reaction is Eliminative cleavage of (1-&gt;4)-alpha-D-galacturonan methyl ester to give oligosaccharides with 4-deoxy-6-O-methyl-alpha-D-galact-4-enuronosyl groups at their non-reducing ends.. In terms of biological role, pectinolytic enzymes consist of four classes of enzymes: pectin lyase, polygalacturonase, pectin methylesterase and rhamnogalacturonase. Among pectinolytic enzymes, pectin lyase is the most important in depolymerization of pectin, since it cleaves internal glycosidic bonds of highly methylated pectins. The polypeptide is Probable pectin lyase C (pelC) (Aspergillus niger).